Consider the following 565-residue polypeptide: NAD-dependent malic enzyme (565 aa).

Tyrosine 104 acts as the Proton donor in catalysis. Arginine 157 provides a ligand contact to NAD(+). Lysine 175 functions as the Proton acceptor in the catalytic mechanism. A divalent metal cation is bound by residues glutamate 246, aspartate 247, and aspartate 270. NAD(+) is bound by residues aspartate 270 and asparagine 418.

The protein belongs to the malic enzymes family. In terms of assembly, homotetramer. The cofactor is Mg(2+). It depends on Mn(2+) as a cofactor.

The catalysed reaction is (S)-malate + NAD(+) = pyruvate + CO2 + NADH. It carries out the reaction oxaloacetate + H(+) = pyruvate + CO2. This chain is NAD-dependent malic enzyme, found in Salmonella choleraesuis (strain SC-B67).